The chain runs to 383 residues: Lipid-A-disaccharide synthase (383 aa).

It belongs to the LpxB family.

The catalysed reaction is 2-N,3-O-bis[(3R)-3-hydroxytetradecanoyl]-alpha-D-glucosaminyl 1-phosphate + UDP-2-N,3-O-bis[(3R)-3-hydroxytetradecanoyl]-alpha-D-glucosamine = lipid A disaccharide (E. coli) + UDP + H(+). It carries out the reaction a lipid X + a UDP-2-N,3-O-bis[(3R)-3-hydroxyacyl]-alpha-D-glucosamine = a lipid A disaccharide + UDP + H(+). The protein operates within glycolipid biosynthesis; lipid IV(A) biosynthesis; lipid IV(A) from (3R)-3-hydroxytetradecanoyl-[acyl-carrier-protein] and UDP-N-acetyl-alpha-D-glucosamine: step 5/6. Its function is as follows. Condensation of UDP-2,3-diacylglucosamine and 2,3-diacylglucosamine-1-phosphate to form lipid A disaccharide, a precursor of lipid A, a phosphorylated glycolipid that anchors the lipopolysaccharide to the outer membrane of the cell. This Klebsiella pneumoniae (strain 342) protein is Lipid-A-disaccharide synthase.